Here is a 407-residue protein sequence, read N- to C-terminus: Carbamoyl phosphate synthase small chain (407 aa).

The tract at residues 1–205 (MTETTPKTAP…LQDGYGEQDA (205 aa)) is CPSase. Ser60, Gly257, and Gly259 together coordinate L-glutamine. The Glutamine amidotransferase type-1 domain maps to 209-397 (HVVALDFGVK…INLIRERKGQ (189 aa)). The Nucleophile role is filled by Cys286. The L-glutamine site is built by Leu287, Gln290, Asn328, Gly330, and Phe331. Residues His370 and Glu372 contribute to the active site.

The protein belongs to the CarA family. Composed of two chains; the small (or glutamine) chain promotes the hydrolysis of glutamine to ammonia, which is used by the large (or ammonia) chain to synthesize carbamoyl phosphate. Tetramer of heterodimers (alpha,beta)4.

It catalyses the reaction hydrogencarbonate + L-glutamine + 2 ATP + H2O = carbamoyl phosphate + L-glutamate + 2 ADP + phosphate + 2 H(+). The enzyme catalyses L-glutamine + H2O = L-glutamate + NH4(+). It functions in the pathway amino-acid biosynthesis; L-arginine biosynthesis; carbamoyl phosphate from bicarbonate: step 1/1. Its pathway is pyrimidine metabolism; UMP biosynthesis via de novo pathway; (S)-dihydroorotate from bicarbonate: step 1/3. Its function is as follows. Small subunit of the glutamine-dependent carbamoyl phosphate synthetase (CPSase). CPSase catalyzes the formation of carbamoyl phosphate from the ammonia moiety of glutamine, carbonate, and phosphate donated by ATP, constituting the first step of 2 biosynthetic pathways, one leading to arginine and/or urea and the other to pyrimidine nucleotides. The small subunit (glutamine amidotransferase) binds and cleaves glutamine to supply the large subunit with the substrate ammonia. In Brucella suis (strain ATCC 23445 / NCTC 10510), this protein is Carbamoyl phosphate synthase small chain.